We begin with the raw amino-acid sequence, 297 residues long: GTPase Era (297 aa).

Positions 3–171 (KSGFVSIVGR…IKVIQNYLEE (169 aa)) constitute an Era-type G domain. Positions 11–18 (GRPNVGKS) are G1. 11-18 (GRPNVGKS) is a GTP binding site. The interval 37 to 41 (QTTRN) is G2. The G3 stretch occupies residues 58 to 61 (DTPG). Residues 58 to 62 (DTPGI) and 120 to 123 (NKID) contribute to the GTP site. Residues 120–123 (NKID) are G4. Residues 150–152 (ISA) form a G5 region. The 87-residue stretch at 194–280 (IREKVLHYLN…NLQLWVKVKE (87 aa)) folds into the KH type-2 domain.

The protein belongs to the TRAFAC class TrmE-Era-EngA-EngB-Septin-like GTPase superfamily. Era GTPase family. Monomer.

The protein resides in the cytoplasm. It localises to the cell membrane. An essential GTPase that binds both GDP and GTP, with rapid nucleotide exchange. Plays a role in 16S rRNA processing and 30S ribosomal subunit biogenesis and possibly also in cell cycle regulation and energy metabolism. The chain is GTPase Era from Clostridioides difficile (strain 630) (Peptoclostridium difficile).